A 577-amino-acid polypeptide reads, in one-letter code: Sulfite reductase [NADPH] hemoprotein beta-component (577 aa).

Positions 440, 446, 486, and 490 each coordinate [4Fe-4S] cluster. Siroheme is bound at residue Cys-490.

This sequence belongs to the nitrite and sulfite reductase 4Fe-4S domain family. As to quaternary structure, alpha(8)-beta(8). The alpha component is a flavoprotein, the beta component is a hemoprotein. Siroheme serves as cofactor. [4Fe-4S] cluster is required as a cofactor.

It catalyses the reaction hydrogen sulfide + 3 NADP(+) + 3 H2O = sulfite + 3 NADPH + 4 H(+). The protein operates within sulfur metabolism; hydrogen sulfide biosynthesis; hydrogen sulfide from sulfite (NADPH route): step 1/1. Functionally, component of the sulfite reductase complex that catalyzes the 6-electron reduction of sulfite to sulfide. This is one of several activities required for the biosynthesis of L-cysteine from sulfate. The chain is Sulfite reductase [NADPH] hemoprotein beta-component from Vibrio cholerae serotype O1 (strain ATCC 39315 / El Tor Inaba N16961).